The primary structure comprises 152 residues: Transcription factor XE1.1 (152 aa).

Disordered stretches follow at residues Arg1 to Ala54 and Lys123 to Met152. 2 stretches are compositionally biased toward basic and acidic residues: residues Asp7–Ser22 and Pro38–Ala54. The region spanning Glu47 to Leu100 is the bHLH domain. A class A specific domain region spans residues Gln102–Ser125. Residues Thr143 to Met152 are compositionally biased toward polar residues.

As to quaternary structure, efficient DNA binding requires dimerization with another bHLH protein. Forms homo- or heterooligomers with myogenin, E12 and ITF2 proteins.

The protein localises to the nucleus. Functionally, transcriptional regulator. Involved in the initiation of neuronal differentiation. Activates transcription by binding to the E box-containing promoter. This Xenopus laevis (African clawed frog) protein is Transcription factor XE1.1.